The primary structure comprises 303 residues: Pycsar effector protein XpPycTIR (303 aa).

Residue 14–138 (LVATLTEHRL…RRIAATLARR (125 aa)) participates in a nucleoside 3',5'-cyclic phosphate binding. Residues 154–273 (RVFIMSSVEA…DLAGLTTIPY (120 aa)) are TIR-like.

It is found in the cytoplasm. It carries out the reaction NAD(+) + H2O = ADP-D-ribose + nicotinamide + H(+). Its function is as follows. Pycsar (pyrimidine cyclase system for antiphage resistance) provides immunity against bacteriophage. The pyrimidine cyclase (PycC) synthesizes cyclic nucleotides in response to infection; these serve as specific second messenger signals. The signals activate the adjacent effector, leading to bacterial cell death and abortive phage infection. A clade B Pycsar system. In terms of biological role, the effector gene of a two-gene Pycsar system. Expression of this and adjacent uridylate cyclase XpPycC (AC P0DV28) confers resistance to bacteriophage T7. When cells expressing the Pycsar system are infected by phage T7 at low multiplicity of infection (0.2 MOI) the culture survivey, at 2.0 MOI bacteria enter growth arrest. The same cells enter growth arrest after exposure to 2.5 mM cUMP but not cCMP; the effector protein responds only to the cUMP usually produced by its cognate NTP cyclase. NAD(+) levels in infected cells are depleted between 5 and 10 minutes after infection with T7 at MOI of 2. Probably only responds to cUMP. This Xanthomonas perforans protein is Pycsar effector protein XpPycTIR.